The chain runs to 221 residues: uncharacterized protein (221 aa).

To E.coli YheO.

This is an uncharacterized protein from Haemophilus influenzae (strain ATCC 51907 / DSM 11121 / KW20 / Rd).